The following is a 237-amino-acid chain: UPF0758 protein Veis_1654 (237 aa).

One can recognise an MPN domain in the interval 115-237 (VFDTPDAVKH…ALSMAEMGLL (123 aa)). Residues His-186, His-188, and Asp-199 each contribute to the Zn(2+) site. The short motif at 186 to 199 (HNHPSGSVQPSRAD) is the JAMM motif element.

This sequence belongs to the UPF0758 family.

The sequence is that of UPF0758 protein Veis_1654 from Verminephrobacter eiseniae (strain EF01-2).